Reading from the N-terminus, the 110-residue chain is Proline-rich protein 15-like protein A (110 aa).

2 disordered regions span residues 29-51 and 65-110; these read IAGDHSSNGGEAPGTTDAATDSQ and TKGR…KSGK. A compositionally biased stretch (basic residues) spans 65-85; that stretch reads TKGRHVKVSHSGRFKEKKRIR. The span at 100 to 110 shows a compositional bias: polar residues; that stretch reads TTANENNKSGK.

This sequence belongs to the PRR15 family.

The polypeptide is Proline-rich protein 15-like protein A (prr15la) (Danio rerio (Zebrafish)).